A 362-amino-acid polypeptide reads, in one-letter code: S-adenosylmethionine:tRNA ribosyltransferase-isomerase (362 aa).

This sequence belongs to the QueA family. As to quaternary structure, monomer.

The protein resides in the cytoplasm. It catalyses the reaction 7-aminomethyl-7-carbaguanosine(34) in tRNA + S-adenosyl-L-methionine = epoxyqueuosine(34) in tRNA + adenine + L-methionine + 2 H(+). Its pathway is tRNA modification; tRNA-queuosine biosynthesis. Transfers and isomerizes the ribose moiety from AdoMet to the 7-aminomethyl group of 7-deazaguanine (preQ1-tRNA) to give epoxyqueuosine (oQ-tRNA). This Xanthobacter autotrophicus (strain ATCC BAA-1158 / Py2) protein is S-adenosylmethionine:tRNA ribosyltransferase-isomerase.